A 49-amino-acid polypeptide reads, in one-letter code: Defensin Tk-AMP-D1 (49 aa).

4 disulfides stabilise this stretch: Cys3-Cys49, Cys14-Cys34, Cys20-Cys43, and Cys24-Cys45.

Functionally, has weak antifungal activity against F.graminearum and F.verticillioides below 30 ug/ml, but not against A.consortiale B.cinerea, H.sativum, F.culmorum, C.graminicola and D.maydis. The polypeptide is Defensin Tk-AMP-D1 (Triticum kiharae (Wheat)).